The primary structure comprises 334 residues: Holliday junction branch migration complex subunit RuvB (334 aa).

A large ATPase domain (RuvB-L) region spans residues 1-182; sequence MNERMVDQSM…FGVHLRLEYY (182 aa). ATP contacts are provided by residues leucine 21, arginine 22, glycine 63, lysine 66, threonine 67, threonine 68, 129–131, arginine 172, tyrosine 182, and arginine 219; that span reads EDF. Threonine 67 contacts Mg(2+). A small ATPAse domain (RuvB-S) region spans residues 183–253; it reads NESDLKEIII…TTKHALGLLQ (71 aa). Positions 256–334 are head domain (RuvB-H); sequence QHGLDYIDHK…HFAKSNEERE (79 aa). Positions 292, 311, and 316 each coordinate DNA.

The protein belongs to the RuvB family. Homohexamer. Forms an RuvA(8)-RuvB(12)-Holliday junction (HJ) complex. HJ DNA is sandwiched between 2 RuvA tetramers; dsDNA enters through RuvA and exits via RuvB. An RuvB hexamer assembles on each DNA strand where it exits the tetramer. Each RuvB hexamer is contacted by two RuvA subunits (via domain III) on 2 adjacent RuvB subunits; this complex drives branch migration. In the full resolvosome a probable DNA-RuvA(4)-RuvB(12)-RuvC(2) complex forms which resolves the HJ.

It is found in the cytoplasm. It carries out the reaction ATP + H2O = ADP + phosphate + H(+). Its function is as follows. The RuvA-RuvB-RuvC complex processes Holliday junction (HJ) DNA during genetic recombination and DNA repair, while the RuvA-RuvB complex plays an important role in the rescue of blocked DNA replication forks via replication fork reversal (RFR). RuvA specifically binds to HJ cruciform DNA, conferring on it an open structure. The RuvB hexamer acts as an ATP-dependent pump, pulling dsDNA into and through the RuvAB complex. RuvB forms 2 homohexamers on either side of HJ DNA bound by 1 or 2 RuvA tetramers; 4 subunits per hexamer contact DNA at a time. Coordinated motions by a converter formed by DNA-disengaged RuvB subunits stimulates ATP hydrolysis and nucleotide exchange. Immobilization of the converter enables RuvB to convert the ATP-contained energy into a lever motion, pulling 2 nucleotides of DNA out of the RuvA tetramer per ATP hydrolyzed, thus driving DNA branch migration. The RuvB motors rotate together with the DNA substrate, which together with the progressing nucleotide cycle form the mechanistic basis for DNA recombination by continuous HJ branch migration. Branch migration allows RuvC to scan DNA until it finds its consensus sequence, where it cleaves and resolves cruciform DNA. In Staphylococcus aureus (strain MRSA252), this protein is Holliday junction branch migration complex subunit RuvB.